Reading from the N-terminus, the 248-residue chain is 3-deoxy-manno-octulosonate cytidylyltransferase (248 aa).

The protein belongs to the KdsB family.

Its subcellular location is the cytoplasm. It carries out the reaction 3-deoxy-alpha-D-manno-oct-2-ulosonate + CTP = CMP-3-deoxy-beta-D-manno-octulosonate + diphosphate. It functions in the pathway nucleotide-sugar biosynthesis; CMP-3-deoxy-D-manno-octulosonate biosynthesis; CMP-3-deoxy-D-manno-octulosonate from 3-deoxy-D-manno-octulosonate and CTP: step 1/1. It participates in bacterial outer membrane biogenesis; lipopolysaccharide biosynthesis. Functionally, activates KDO (a required 8-carbon sugar) for incorporation into bacterial lipopolysaccharide in Gram-negative bacteria. This Klebsiella pneumoniae (strain 342) protein is 3-deoxy-manno-octulosonate cytidylyltransferase.